A 224-amino-acid polypeptide reads, in one-letter code: Probable septum site-determining protein MinC (224 aa).

Belongs to the MinC family. Interacts with MinD and FtsZ.

In terms of biological role, cell division inhibitor that blocks the formation of polar Z ring septums. Rapidly oscillates between the poles of the cell to destabilize FtsZ filaments that have formed before they mature into polar Z rings. Prevents FtsZ polymerization. In Shewanella amazonensis (strain ATCC BAA-1098 / SB2B), this protein is Probable septum site-determining protein MinC.